A 300-amino-acid chain; its full sequence is Protoheme IX farnesyltransferase (300 aa).

9 helical membrane-spanning segments follow: residues 28-48 (VVAL…PTIL), 50-70 (VQPL…AAAL), 100-120 (ALIF…VFTN), 122-142 (LTAW…TAYL), 149-169 (NIVI…TAVT), 176-196 (ALLL…ALAI), 222-242 (CILL…LVGM), 243-263 (SGPL…YKAW), and 280-300 (FSIY…YLWA).

The protein belongs to the UbiA prenyltransferase family. Protoheme IX farnesyltransferase subfamily.

The protein localises to the cell inner membrane. It catalyses the reaction heme b + (2E,6E)-farnesyl diphosphate + H2O = Fe(II)-heme o + diphosphate. Its pathway is porphyrin-containing compound metabolism; heme O biosynthesis; heme O from protoheme: step 1/1. In terms of biological role, converts heme B (protoheme IX) to heme O by substitution of the vinyl group on carbon 2 of heme B porphyrin ring with a hydroxyethyl farnesyl side group. In Shewanella oneidensis (strain ATCC 700550 / JCM 31522 / CIP 106686 / LMG 19005 / NCIMB 14063 / MR-1), this protein is Protoheme IX farnesyltransferase.